We begin with the raw amino-acid sequence, 394 residues long: Phosphopentomutase (394 aa).

Positions 10, 282, 287, 323, 324, and 335 each coordinate Mn(2+).

This sequence belongs to the phosphopentomutase family. Mn(2+) is required as a cofactor.

It is found in the cytoplasm. The catalysed reaction is 2-deoxy-alpha-D-ribose 1-phosphate = 2-deoxy-D-ribose 5-phosphate. The enzyme catalyses alpha-D-ribose 1-phosphate = D-ribose 5-phosphate. Its pathway is carbohydrate degradation; 2-deoxy-D-ribose 1-phosphate degradation; D-glyceraldehyde 3-phosphate and acetaldehyde from 2-deoxy-alpha-D-ribose 1-phosphate: step 1/2. In terms of biological role, isomerase that catalyzes the conversion of deoxy-ribose 1-phosphate (dRib-1-P) and ribose 1-phosphate (Rib-1-P) to deoxy-ribose 5-phosphate (dRib-5-P) and ribose 5-phosphate (Rib-5-P), respectively. In Dictyoglomus turgidum (strain DSM 6724 / Z-1310), this protein is Phosphopentomutase.